Here is a 273-residue protein sequence, read N- to C-terminus: MDIGLREWLIVIGIIVIAGILFDGWRRMRGGKGKLKFKLDRSLSNLPDVDDSPELLGPARVVNREHEPSLSENDLPPVTARESSKKRRQDEPYQGDLQLSTEEPVPTLLDPVVGDDDDLQERPQKEQAPVEEVLVINVISRDPHGFRGPALLQNILESGLRFGEMDIFHRHESMAGNGEVLFSMANAVKPGTFDLDDIDHFTTPAVSFFLGLPGPRHPKQAFDVMVAAARKLSQELNGELKDDQRSVLTAQTIEHYRQRIVEFERRQMTIKQR.

A topological domain (periplasmic) is located at residue M1. The helical transmembrane segment at 2–22 (DIGLREWLIVIGIIVIAGILF) threads the bilayer. Topologically, residues 23–273 (DGWRRMRGGK…ERRQMTIKQR (251 aa)) are cytoplasmic. The disordered stretch occupies residues 61-127 (VVNREHEPSL…DLQERPQKEQ (67 aa)).

Belongs to the ZipA family. Interacts with FtsZ via their C-terminal domains.

The protein localises to the cell inner membrane. Essential cell division protein that stabilizes the FtsZ protofilaments by cross-linking them and that serves as a cytoplasmic membrane anchor for the Z ring. Also required for the recruitment to the septal ring of downstream cell division proteins. This chain is Cell division protein ZipA, found in Stutzerimonas stutzeri (strain A1501) (Pseudomonas stutzeri).